The primary structure comprises 336 residues: HTH-type transcriptional regulator AscG (336 aa).

The HTH lacI-type domain occupies 2–56 (TTMLEVAKRAGVSKATVSRVLSGNGYVSQETKDRVFQAVEESGYRPNLLARNLSA). The segment at residues 4 to 23 (MLEVAKRAGVSKATVSRVLS) is a DNA-binding region (H-T-H motif).

Functionally, repressor of the asc operon. The cryptic operon is activated by the insertion of IS186 into the ascG gene. The polypeptide is HTH-type transcriptional regulator AscG (ascG) (Escherichia coli (strain K12)).